A 205-amino-acid chain; its full sequence is NADH-quinone oxidoreductase subunit C (205 aa).

It belongs to the complex I 30 kDa subunit family. In terms of assembly, NDH-1 is composed of 14 different subunits. Subunits NuoB, C, D, E, F, and G constitute the peripheral sector of the complex.

It is found in the cell inner membrane. It catalyses the reaction a quinone + NADH + 5 H(+)(in) = a quinol + NAD(+) + 4 H(+)(out). NDH-1 shuttles electrons from NADH, via FMN and iron-sulfur (Fe-S) centers, to quinones in the respiratory chain. The immediate electron acceptor for the enzyme in this species is believed to be ubiquinone. Couples the redox reaction to proton translocation (for every two electrons transferred, four hydrogen ions are translocated across the cytoplasmic membrane), and thus conserves the redox energy in a proton gradient. The protein is NADH-quinone oxidoreductase subunit C of Bartonella bacilliformis (strain ATCC 35685 / KC583 / Herrer 020/F12,63).